The following is a 502-amino-acid chain: Glycerol kinase (502 aa).

Thr14 is an ADP binding site. Residues Thr14, Thr15, and Ser16 each coordinate ATP. Thr14 is a binding site for sn-glycerol 3-phosphate. Arg18 provides a ligand contact to ADP. Sn-glycerol 3-phosphate contacts are provided by Arg84, Glu85, and Tyr136. 3 residues coordinate glycerol: Arg84, Glu85, and Tyr136. Position 232 is a phosphohistidine; by HPr (His232). Asp246 contributes to the sn-glycerol 3-phosphate binding site. Asp246 and Gln247 together coordinate glycerol. Residues Thr268 and Gly311 each coordinate ADP. ATP-binding residues include Thr268, Gly311, Gln315, and Gly412. Residues Gly412 and Asn416 each coordinate ADP.

This sequence belongs to the FGGY kinase family. As to quaternary structure, homotetramer and homodimer (in equilibrium). The phosphoenolpyruvate-dependent sugar phosphotransferase system (PTS), including enzyme I, and histidine-containing protein (HPr) are required for the phosphorylation, which leads to the activation of the enzyme.

The catalysed reaction is glycerol + ATP = sn-glycerol 3-phosphate + ADP + H(+). The protein operates within polyol metabolism; glycerol degradation via glycerol kinase pathway; sn-glycerol 3-phosphate from glycerol: step 1/1. With respect to regulation, activated by phosphorylation and inhibited by fructose 1,6-bisphosphate (FBP). Its function is as follows. Key enzyme in the regulation of glycerol uptake and metabolism. Catalyzes the phosphorylation of glycerol to yield sn-glycerol 3-phosphate. This chain is Glycerol kinase, found in Streptococcus gordonii (strain Challis / ATCC 35105 / BCRC 15272 / CH1 / DL1 / V288).